We begin with the raw amino-acid sequence, 593 residues long: Aspartate--tRNA ligase (593 aa).

Glu-180 is a binding site for L-aspartate. The tract at residues 204–207 is aspartate; the sequence is QLFK. L-aspartate is bound at residue Arg-226. Residues 226 to 228 and Gln-235 contribute to the ATP site; that span reads RDE. His-454 serves as a coordination point for L-aspartate. Glu-488 is a binding site for ATP. Arg-495 provides a ligand contact to L-aspartate. 540 to 543 contacts ATP; that stretch reads GFDR.

The protein belongs to the class-II aminoacyl-tRNA synthetase family. Type 1 subfamily. As to quaternary structure, homodimer.

It localises to the cytoplasm. It carries out the reaction tRNA(Asp) + L-aspartate + ATP = L-aspartyl-tRNA(Asp) + AMP + diphosphate. In terms of biological role, catalyzes the attachment of L-aspartate to tRNA(Asp) in a two-step reaction: L-aspartate is first activated by ATP to form Asp-AMP and then transferred to the acceptor end of tRNA(Asp). The sequence is that of Aspartate--tRNA ligase from Clostridium novyi (strain NT).